A 466-amino-acid polypeptide reads, in one-letter code: Glutamate--tRNA ligase (466 aa).

The 'HIGH' region signature appears at 10 to 20; the sequence is PSPTGYLHIGG. The 'KMSKS' region signature appears at 237–241; sequence RLSKR. K240 is an ATP binding site.

The protein belongs to the class-I aminoacyl-tRNA synthetase family. Glutamate--tRNA ligase type 1 subfamily. Monomer.

The protein resides in the cytoplasm. The enzyme catalyses tRNA(Glu) + L-glutamate + ATP = L-glutamyl-tRNA(Glu) + AMP + diphosphate. Functionally, catalyzes the attachment of glutamate to tRNA(Glu) in a two-step reaction: glutamate is first activated by ATP to form Glu-AMP and then transferred to the acceptor end of tRNA(Glu). This chain is Glutamate--tRNA ligase, found in Syntrophotalea carbinolica (strain DSM 2380 / NBRC 103641 / GraBd1) (Pelobacter carbinolicus).